A 465-amino-acid chain; its full sequence is Fumarate hydratase class II (465 aa).

Substrate is bound by residues 100–102 (SGT), 131–134 (HPND), 141–143 (SSN), and threonine 189. The Proton donor/acceptor role is filled by histidine 190. Serine 320 is a catalytic residue. Substrate is bound by residues serine 321 and 326–328 (KVN).

This sequence belongs to the class-II fumarase/aspartase family. Fumarase subfamily. In terms of assembly, homotetramer.

Its subcellular location is the cytoplasm. It catalyses the reaction (S)-malate = fumarate + H2O. It participates in carbohydrate metabolism; tricarboxylic acid cycle; (S)-malate from fumarate: step 1/1. Its function is as follows. Involved in the TCA cycle. Catalyzes the stereospecific interconversion of fumarate to L-malate. This chain is Fumarate hydratase class II, found in Mesorhizobium japonicum (strain LMG 29417 / CECT 9101 / MAFF 303099) (Mesorhizobium loti (strain MAFF 303099)).